The sequence spans 108 residues: ATP-dependent Clp protease adapter protein ClpS (108 aa).

This sequence belongs to the ClpS family. In terms of assembly, binds to the N-terminal domain of the chaperone ClpA.

In terms of biological role, involved in the modulation of the specificity of the ClpAP-mediated ATP-dependent protein degradation. The sequence is that of ATP-dependent Clp protease adapter protein ClpS from Ralstonia nicotianae (strain ATCC BAA-1114 / GMI1000) (Ralstonia solanacearum).